A 134-amino-acid chain; its full sequence is Phosphoribosyl-AMP cyclohydrolase (134 aa).

D77 is a Mg(2+) binding site. Residue C78 participates in Zn(2+) binding. Mg(2+) contacts are provided by D79 and D81. Zn(2+)-binding residues include C95 and C102.

It belongs to the PRA-CH family. As to quaternary structure, homodimer. Mg(2+) is required as a cofactor. It depends on Zn(2+) as a cofactor.

The protein resides in the cytoplasm. The enzyme catalyses 1-(5-phospho-beta-D-ribosyl)-5'-AMP + H2O = 1-(5-phospho-beta-D-ribosyl)-5-[(5-phospho-beta-D-ribosylamino)methylideneamino]imidazole-4-carboxamide. The protein operates within amino-acid biosynthesis; L-histidine biosynthesis; L-histidine from 5-phospho-alpha-D-ribose 1-diphosphate: step 3/9. In terms of biological role, catalyzes the hydrolysis of the adenine ring of phosphoribosyl-AMP. This Pseudomonas aeruginosa (strain UCBPP-PA14) protein is Phosphoribosyl-AMP cyclohydrolase.